The following is a 206-amino-acid chain: Alpha-amylase/trypsin inhibitor (206 aa).

Disulfide bonds link cysteine 9-cysteine 205, cysteine 51-cysteine 61, cysteine 66-cysteine 72, cysteine 118-cysteine 194, cysteine 124-cysteine 177, cysteine 132-cysteine 142, cysteine 146-cysteine 155, and cysteine 156-cysteine 164.

Belongs to the thaumatin family.

Inhibits both trypsin and alpha-amylase. Inhibits the growth of some plant fungal pathogens. The chain is Alpha-amylase/trypsin inhibitor from Zea mays (Maize).